A 265-amino-acid chain; its full sequence is Hydroxyethylthiazole kinase 1 (265 aa).

Methionine 39 serves as a coordination point for substrate. ATP-binding residues include lysine 115 and threonine 168. Residue glycine 195 coordinates substrate.

Belongs to the Thz kinase family. The cofactor is Mg(2+).

It catalyses the reaction 5-(2-hydroxyethyl)-4-methylthiazole + ATP = 4-methyl-5-(2-phosphooxyethyl)-thiazole + ADP + H(+). Its pathway is cofactor biosynthesis; thiamine diphosphate biosynthesis; 4-methyl-5-(2-phosphoethyl)-thiazole from 5-(2-hydroxyethyl)-4-methylthiazole: step 1/1. Functionally, catalyzes the phosphorylation of the hydroxyl group of 4-methyl-5-beta-hydroxyethylthiazole (THZ). This is Hydroxyethylthiazole kinase 1 from Clostridium botulinum (strain Loch Maree / Type A3).